A 60-amino-acid polypeptide reads, in one-letter code: Large ribosomal subunit protein bL32 (60 aa).

The protein belongs to the bacterial ribosomal protein bL32 family.

This chain is Large ribosomal subunit protein bL32, found in Desulfovibrio desulfuricans (strain ATCC 27774 / DSM 6949 / MB).